The sequence spans 580 residues: Acyl-coenzyme A synthetase ACSM4, mitochondrial (580 aa).

The transit peptide at 1 to 22 (MKVLLRCQRLRFIWLAKPAGRH) directs the protein to the mitochondrion. ATP-binding positions include 229–237 (TSGTTGSPK), 368–373 (EGYGQT), D455, R470, and K566.

This sequence belongs to the ATP-dependent AMP-binding enzyme family. The cofactor is Mg(2+). Requires Mn(2+) as cofactor. Detected in adult olfactory epithelium.

The protein localises to the mitochondrion. The enzyme catalyses a medium-chain fatty acid + ATP + CoA = a medium-chain fatty acyl-CoA + AMP + diphosphate. The catalysed reaction is hexanoate + ATP + CoA = hexanoyl-CoA + AMP + diphosphate. It carries out the reaction octanoate + ATP + CoA = octanoyl-CoA + AMP + diphosphate. It catalyses the reaction decanoate + ATP + CoA = decanoyl-CoA + AMP + diphosphate. The enzyme catalyses dodecanoate + ATP + CoA = dodecanoyl-CoA + AMP + diphosphate. Functionally, catalyzes the activation of fatty acids by CoA to produce an acyl-CoA, the first step in fatty acid metabolism. Capable of activating medium-chain fatty acids with a preference for C6-12 fatty acids. The protein is Acyl-coenzyme A synthetase ACSM4, mitochondrial (Acsm4) of Rattus norvegicus (Rat).